The primary structure comprises 209 residues: Ribosomal RNA large subunit methyltransferase E (209 aa).

The S-adenosyl-L-methionine site is built by glycine 63, tryptophan 65, aspartate 83, aspartate 99, and aspartate 124. The active-site Proton acceptor is lysine 164.

It belongs to the class I-like SAM-binding methyltransferase superfamily. RNA methyltransferase RlmE family.

It is found in the cytoplasm. The enzyme catalyses uridine(2552) in 23S rRNA + S-adenosyl-L-methionine = 2'-O-methyluridine(2552) in 23S rRNA + S-adenosyl-L-homocysteine + H(+). Specifically methylates the uridine in position 2552 of 23S rRNA at the 2'-O position of the ribose in the fully assembled 50S ribosomal subunit. This Yersinia pseudotuberculosis serotype O:1b (strain IP 31758) protein is Ribosomal RNA large subunit methyltransferase E.